A 395-amino-acid polypeptide reads, in one-letter code: Multidrug resistance protein MdtL (395 aa).

Over 1-3 the chain is Cytoplasmic; the sequence is MKR. A helical transmembrane segment spans residues 4-24; that stretch reads FLLCSFALVLLYPAGIDMYLV. Residues 25-41 are Periplasmic-facing; that stretch reads GLPRIAADLNASEAQLH. A helical membrane pass occupies residues 42-62; the sequence is IAFSVYLAGMATAMLFAGKIA. At 63 to 68 the chain is on the cytoplasmic side; the sequence is DQSGRK. Residues 69 to 89 form a helical membrane-spanning segment; that stretch reads PVAIVGALVFMMASLLCSRAS. At 90–92 the chain is on the periplasmic side; that stretch reads EGS. Residues 93–113 form a helical membrane-spanning segment; the sequence is LFLSGRFLQGVGAGGCYVVAF. At 114–130 the chain is on the cytoplasmic side; that stretch reads AILRDTLDEHRRAKVLS. A helical transmembrane segment spans residues 131–151; that stretch reads LLNGITCIVPVLAPVVGHLIM. The Periplasmic segment spans residues 152–157; the sequence is LRFPWQ. Residues 158 to 178 traverse the membrane as a helical segment; sequence SLFYTMSAMGIIVGLLSLFIL. At 179–216 the chain is on the cytoplasmic side; sequence RETRPVRLAPRDLSRSSPAAESLINRFFVSRLAITTLS. Residues 217–237 form a helical membrane-spanning segment; sequence VSVILTFVNASPVLLMEVMGF. The Periplasmic portion of the chain corresponds to 238–246; sequence SRGDYAITM. A helical membrane pass occupies residues 247–267; it reads ALTAGVSMVVSFSTPFALGLF. At 268–270 the chain is on the cytoplasmic side; sequence KPR. The helical transmembrane segment at 271-291 threads the bilayer; that stretch reads TLMLVSQGLFLTAGVTLSLAH. Residues 292–294 are Periplasmic-facing; that stretch reads TNT. The helical transmembrane segment at 295–315 threads the bilayer; the sequence is VTLFGLTLICAGFSVGFGVAM. Residues 316–327 lie on the Cytoplasmic side of the membrane; that stretch reads SQALGPFSLRAG. A helical membrane pass occupies residues 328-350; that stretch reads VASSTLGIAQVCGSSLWIWLAAI. The Periplasmic portion of the chain corresponds to 351–354; that stretch reads LGIS. A helical transmembrane segment spans residues 355-377; the sequence is AMNMLIGILIGCSIVSILLIFSV. Residues 378–395 are Cytoplasmic-facing; it reads TPNRSVAEHEEIPYQSRP.

The protein belongs to the major facilitator superfamily. DHA1 family. MdtL (TC 2.A.1.2.22) subfamily.

It localises to the cell inner membrane. This chain is Multidrug resistance protein MdtL (mdtL), found in Salmonella typhimurium (strain LT2 / SGSC1412 / ATCC 700720).